Reading from the N-terminus, the 321-residue chain is Glycerol-3-phosphate dehydrogenase [NAD(P)+] (321 aa).

Residues serine 10, tryptophan 11, arginine 31, arginine 32, tyrosine 47, and lysine 98 each coordinate NADPH. Residues lysine 98, glycine 125, and serine 127 each coordinate sn-glycerol 3-phosphate. Residue alanine 129 coordinates NADPH. Residues lysine 177, aspartate 230, serine 240, arginine 241, and asparagine 242 each contribute to the sn-glycerol 3-phosphate site. Lysine 177 (proton acceptor) is an active-site residue. Residue arginine 241 participates in NADPH binding. NADPH-binding residues include valine 265 and glutamate 267.

Belongs to the NAD-dependent glycerol-3-phosphate dehydrogenase family.

The protein resides in the cytoplasm. It catalyses the reaction sn-glycerol 3-phosphate + NAD(+) = dihydroxyacetone phosphate + NADH + H(+). The enzyme catalyses sn-glycerol 3-phosphate + NADP(+) = dihydroxyacetone phosphate + NADPH + H(+). It participates in membrane lipid metabolism; glycerophospholipid metabolism. Catalyzes the reduction of the glycolytic intermediate dihydroxyacetone phosphate (DHAP) to sn-glycerol 3-phosphate (G3P), the key precursor for phospholipid synthesis. This chain is Glycerol-3-phosphate dehydrogenase [NAD(P)+], found in Thermotoga sp. (strain RQ2).